We begin with the raw amino-acid sequence, 147 residues long: C-glycoside deglycosidase beta subunit (147 aa).

Belongs to the C-glycoside deglycosidase beta subunit family. Heterooctamer composed of four alpha subunits (DfgA) and four beta subunits (DfgB). Requires Mn(2+) as cofactor.

The catalysed reaction is 3''-dehydroisoorientin = 1,5-anhydro-D-erythro-hex-1-en-3-ulose + luteolin. It carries out the reaction 3''-dehydroisovitexin = 1,5-anhydro-D-erythro-hex-1-en-3-ulose + apigenin. Activity is strongly reduced in the presence of chelating agents. Carbon-carbon bond-cleaving enzyme which participates in the metabolism of C-glycosides. Acts on the C6-glycosylated compounds 3''-dehydroisoorientin (3''-oxo-homoorientin) and 3''-dehydroisovitexin (3''-oxo-isovitexin). The polypeptide is C-glycoside deglycosidase beta subunit (Eubacterium cellulosolvens (strain ATCC 43171 / JCM 9499 / 6) (Cillobacterium cellulosolvens)).